Consider the following 1235-residue polypeptide: DNA polymerase catalytic subunit (1235 aa).

Disordered stretches follow at residues 640–691 (QGRF…ETAG) and 1098–1134 (AAAPGDEPAPPAALPSPAKRPRETPSPADPPGGASKP). Over residues 650-661 (APKRPAAAREDE) the composition is skewed to basic and acidic residues. A compositionally biased stretch (acidic residues) spans 662-675 (ERPEEEGEDEDERE). Residues 676-691 (EGGGEREPDGARETAG) show a composition bias toward basic and acidic residues.

Belongs to the DNA polymerase type-B family. As to quaternary structure, forms a complex with the ssDNA-binding protein UL29, the DNA polymerase processivity factor, and the alkaline exonuclease. Interacts with the putative helicase-primase complex subunit UL8; this interaction may coordinate leading and lagging strand DNA synthesis at the replication fork.

Its subcellular location is the host nucleus. It catalyses the reaction DNA(n) + a 2'-deoxyribonucleoside 5'-triphosphate = DNA(n+1) + diphosphate. The enzyme catalyses Endonucleolytic cleavage to 5'-phosphomonoester.. Its function is as follows. Replicates viral genomic DNA. The replication complex is composed of six viral proteins: the DNA polymerase, processivity factor, primase, primase-associated factor, helicase, and ssDNA-binding protein. Additionally, the polymerase contains an intrinsic ribonuclease H (RNase H) activity that specifically degrades RNA/DNA heteroduplexes or duplex DNA substrates in the 5' to 3' direction. Therefore, it can catalyze the excision of the RNA primers that initiate the synthesis of Okazaki fragments at a replication fork during viral DNA replication. The protein is DNA polymerase catalytic subunit of Homo sapiens (Human).